The primary structure comprises 660 residues: Polycomb protein SCMH1 (660 aa).

2 MBT repeats span residues 28–126 (FTWD…LQPP) and 134–235 (SSWP…LQPP). Residues 233 to 345 (QPPGTKVVIP…EPDTSTVPQD (113 aa)) are disordered. Basic residues-rich tracts occupy residues 273 to 284 (RGRKPGKKRGRT) and 305 to 320 (FPKK…RKPR). Over residues 330 to 343 (PTTSTPEPDTSTVP) the composition is skewed to low complexity. The 66-residue stretch at 593-658 (WTVEDVMQFV…SYHIDRLKQG (66 aa)) folds into the SAM domain.

The protein belongs to the SCM family. Interacts with the SAM domain of PHC1 via its SAM domain in vitro. Associates with a PRC1-like complex. In terms of tissue distribution, strongly expressed in heart, muscle and pancreas. Weakly expressed in brain, placenta, lung, liver and kidney.

The protein resides in the nucleus. In terms of biological role, associates with Polycomb group (PcG) multiprotein complexes; the complex class is required to maintain the transcriptionally repressive state of some genes. This Homo sapiens (Human) protein is Polycomb protein SCMH1.